Here is a 398-residue protein sequence, read N- to C-terminus: Exodeoxyribonuclease 7 large subunit (398 aa).

It belongs to the XseA family. As to quaternary structure, heterooligomer composed of large and small subunits.

Its subcellular location is the cytoplasm. The catalysed reaction is Exonucleolytic cleavage in either 5'- to 3'- or 3'- to 5'-direction to yield nucleoside 5'-phosphates.. In terms of biological role, bidirectionally degrades single-stranded DNA into large acid-insoluble oligonucleotides, which are then degraded further into small acid-soluble oligonucleotides. The polypeptide is Exodeoxyribonuclease 7 large subunit (Salinibacter ruber (strain DSM 13855 / M31)).